The primary structure comprises 141 residues: Hemoglobin subunit alpha-D (141 aa).

Residues 1–141 (VLTAEDRRLL…VADVLSEKYR (141 aa)) form the Globin domain. Positions 57 and 87 each coordinate heme b.

It belongs to the globin family. In terms of assembly, the deoxy-Hb is a heterotetramer of two alpha and two beta chains, but oxygenation results in dissociation to dimers. As to expression, red blood cells.

Functionally, involved in oxygen transport from the lung to the various peripheral tissues. The chain is Hemoglobin subunit alpha-D (HBAD) from Erythrolamprus miliaris (South American water snake).